The chain runs to 132 residues: Small ribosomal subunit protein uS8c (132 aa).

The protein belongs to the universal ribosomal protein uS8 family. Part of the 30S ribosomal subunit.

It is found in the plastid. It localises to the chloroplast. Its function is as follows. One of the primary rRNA binding proteins, it binds directly to 16S rRNA central domain where it helps coordinate assembly of the platform of the 30S subunit. The sequence is that of Small ribosomal subunit protein uS8c (rps8) from Zygnema circumcarinatum (Green alga).